The primary structure comprises 631 residues: Acurin A biosynthesis cluster transcription regulator (631 aa).

A compositionally biased stretch (polar residues) spans 1 to 11 (MSPNMSLTASH). Residues 1–28 (MSPNMSLTASHPQQPQPTPQSKAQLTRQ) are disordered. A DNA-binding region (zn(2)-C6 fungal-type) is located at residues 30–62 (CNRCHASKLKCLRPPGVTTSKSCIRCIKADTEC). 3 disordered regions span residues 64 to 141 (YDPP…PDNR), 489 to 522 (CSSS…HPAT), and 536 to 573 (HSSS…YPTP). Over residues 88–99 (IEAREPEVTDPR) the composition is skewed to basic and acidic residues. Positions 119 to 128 (NGSLAPSSAA) are enriched in polar residues.

Its subcellular location is the nucleus. Transcription factor that positively regulates the expression of the cluster that mediates the biosynthesis of acurin A, a highly reduced polyketide coupled to a serine via a peptide bond. This is Acurin A biosynthesis cluster transcription regulator from Aspergillus aculeatus (strain ATCC 16872 / CBS 172.66 / WB 5094).